A 390-amino-acid polypeptide reads, in one-letter code: MNIHEYQGKDILRKFGVTVPKGIVAYSADEAKQAAEQLFAETGSSVVVVKAQIHAGGRGKAGGVKLAKSPEEAFEIARQMIGMTLITHQTGPEGKVVSRLLIEEGMGIEKEFYVGITLDRATSRNVLMVSTEGGMEIETVAEETPEKLLKIQIDPLFGMQGFQAREAAFFLGLEGEQFRNAVNFITALYKAYTSIDASVAEINPLVVTSEGKVIALDAKINFDDNALYRHKEYMELRDTSEEDPFEVEASKSNLNYVRLDGNVGCMVNGAGLAMGTMDIIQLAGGKPANFLDVGGTASPQTVEEGFKIILSDKNVRAILVNIFGGIVRCDRVAGGIMEAAKKMDLHLPVIVRLEGTNASIAQQMLDESGLSLIAAKGLRDAAQKVQEALA.

The ATP-grasp domain maps to 9–248; the sequence is KDILRKFGVT…TSEEDPFEVE (240 aa). Residues Lys50, 57–59, Glu103, Met106, and Glu111 contribute to the ATP site; that span reads GRG. Mg(2+) is bound by residues Asn203 and Asp217. Substrate contacts are provided by residues Asn268 and 325–327; that span reads GIV.

Belongs to the succinate/malate CoA ligase beta subunit family. Heterotetramer of two alpha and two beta subunits. Mg(2+) is required as a cofactor.

It carries out the reaction succinate + ATP + CoA = succinyl-CoA + ADP + phosphate. The enzyme catalyses GTP + succinate + CoA = succinyl-CoA + GDP + phosphate. The protein operates within carbohydrate metabolism; tricarboxylic acid cycle; succinate from succinyl-CoA (ligase route): step 1/1. Succinyl-CoA synthetase functions in the citric acid cycle (TCA), coupling the hydrolysis of succinyl-CoA to the synthesis of either ATP or GTP and thus represents the only step of substrate-level phosphorylation in the TCA. The beta subunit provides nucleotide specificity of the enzyme and binds the substrate succinate, while the binding sites for coenzyme A and phosphate are found in the alpha subunit. This is Succinate--CoA ligase [ADP-forming] subunit beta from Chlorobium chlorochromatii (strain CaD3).